A 140-amino-acid chain; its full sequence is Large ribosomal subunit protein bL17 (140 aa).

Belongs to the bacterial ribosomal protein bL17 family. In terms of assembly, part of the 50S ribosomal subunit. Contacts protein L32.

This chain is Large ribosomal subunit protein bL17, found in Ruegeria pomeroyi (strain ATCC 700808 / DSM 15171 / DSS-3) (Silicibacter pomeroyi).